A 430-amino-acid chain; its full sequence is Aspartate aminotransferase, mitochondrial (430 aa).

The transit peptide at 1–29 (MALLHSSRILSGMAAAFHPGLAAAASARA) directs the protein to the mitochondrion. T48 is modified (phosphothreonine). K59 bears the N6-acetyllysine mark. Residue G65 participates in substrate binding. K73 is subject to N6-acetyllysine; alternate. Position 73 is an N6-succinyllysine; alternate (K73). K82 bears the N6-acetyllysine mark. Position 90 is an N6-acetyllysine; alternate (K90). K90 carries the N6-succinyllysine; alternate modification. A 3'-nitrotyrosine; alternate modification is found at Y96. Residue Y96 is modified to Phosphotyrosine; alternate. N6-acetyllysine; alternate is present on residues K107 and K122. N6-succinyllysine; alternate is present on residues K107 and K122. S143 bears the Phosphoserine mark. K159 carries the post-translational modification N6-acetyllysine; alternate. N6-succinyllysine; alternate is present on K159. W162 contributes to the substrate binding site. N6-acetyllysine; alternate is present on K185. K185 carries the post-translational modification N6-succinyllysine; alternate. A substrate-binding site is contributed by N215. K227 is modified (N6-succinyllysine). The residue at position 234 (K234) is an N6-acetyllysine. 2 positions are modified to N6-acetyllysine; alternate: K279 and K296. K279 carries the post-translational modification N6-(pyridoxal phosphate)lysine; alternate. K296 bears the N6-succinyllysine; alternate mark. At K302 the chain carries N6-acetyllysine. Residue K309 is modified to N6-acetyllysine; alternate. Residue K309 is modified to N6-succinyllysine; alternate. Residue R313 is modified to Asymmetric dimethylarginine. Position 338 is an N6-acetyllysine; alternate (K338). An N6-succinyllysine; alternate modification is found at K338. K345 carries the N6-acetyllysine modification. K363 carries the post-translational modification N6-acetyllysine; alternate. At K363 the chain carries N6-succinyllysine; alternate. An N6-acetyllysine mark is found at K364 and K387. N6-acetyllysine; alternate occurs at positions 396 and 404. N6-succinyllysine; alternate occurs at positions 396 and 404. R407 contributes to the substrate binding site.

The protein belongs to the class-I pyridoxal-phosphate-dependent aminotransferase family. In terms of assembly, homodimer. Pyridoxal 5'-phosphate is required as a cofactor. In terms of processing, acetylation of Lys-296, Lys-345 and Lys-363 is observed in liver mitochondria from fasted mice but not from fed mice. In terms of tissue distribution, detected in brain (at protein level).

The protein resides in the mitochondrion matrix. The protein localises to the cell membrane. The enzyme catalyses L-aspartate + 2-oxoglutarate = oxaloacetate + L-glutamate. It catalyses the reaction L-kynurenine + 2-oxoglutarate = kynurenate + L-glutamate + H2O. Functionally, catalyzes the irreversible transamination of the L-tryptophan metabolite L-kynurenine to form kynurenic acid (KA). As a member of the malate-aspartate shuttle, it has a key role in the intracellular NAD(H) redox balance. Is important for metabolite exchange between mitochondria and cytosol, and for amino acid metabolism. Facilitates cellular uptake of long-chain free fatty acids. The polypeptide is Aspartate aminotransferase, mitochondrial (Got2) (Mus musculus (Mouse)).